The following is an 869-amino-acid chain: Valine--tRNA ligase (869 aa).

A 'HIGH' region motif is present at residues 47–57 (PYPTGNFHIGN). Residues 521 to 525 (KMSKS) carry the 'KMSKS' region motif. Lys-524 contacts ATP.

The protein belongs to the class-I aminoacyl-tRNA synthetase family. ValS type 2 subfamily.

Its subcellular location is the cytoplasm. It carries out the reaction tRNA(Val) + L-valine + ATP = L-valyl-tRNA(Val) + AMP + diphosphate. In terms of biological role, catalyzes the attachment of valine to tRNA(Val). As ValRS can inadvertently accommodate and process structurally similar amino acids such as threonine, to avoid such errors, it has a 'posttransfer' editing activity that hydrolyzes mischarged Thr-tRNA(Val) in a tRNA-dependent manner. In Methanosarcina mazei (strain ATCC BAA-159 / DSM 3647 / Goe1 / Go1 / JCM 11833 / OCM 88) (Methanosarcina frisia), this protein is Valine--tRNA ligase.